The primary structure comprises 129 residues: Histone H2A (129 aa).

It belongs to the histone H2A family. In terms of assembly, the nucleosome is a histone octamer containing two molecules each of H2A, H2B, H3 and H4 assembled in one H3-H4 heterotetramer and two H2A-H2B heterodimers. The octamer wraps approximately 147 bp of DNA.

It is found in the nucleus. The protein resides in the chromosome. Core component of nucleosome. Nucleosomes wrap and compact DNA into chromatin, limiting DNA accessibility to the cellular machineries which require DNA as a template. Histones thereby play a central role in transcription regulation, DNA repair, DNA replication and chromosomal stability. DNA accessibility is regulated via a complex set of post-translational modifications of histones, also called histone code, and nucleosome remodeling. The chain is Histone H2A (H2A-II) from Chlamydomonas reinhardtii (Chlamydomonas smithii).